The following is a 432-amino-acid chain: Ribosomal protein uS12 methylthiotransferase RimO (432 aa).

Residues 4 to 122 (NTIDIITLGC…LLADLGKAYK (119 aa)) enclose the MTTase N-terminal domain. Residues Cys-13, Cys-51, Cys-85, Cys-146, Cys-150, and Cys-153 each coordinate [4Fe-4S] cluster. The 232-residue stretch at 132–363 (TTPHHYAYLK…MALQQEIAGE (232 aa)) folds into the Radical SAM core domain. In terms of domain architecture, TRAM spans 366–432 (QTKIGKEFKV…DDFDLYASIL (67 aa)).

Belongs to the methylthiotransferase family. RimO subfamily. Requires [4Fe-4S] cluster as cofactor.

It localises to the cytoplasm. The catalysed reaction is L-aspartate(89)-[ribosomal protein uS12]-hydrogen + (sulfur carrier)-SH + AH2 + 2 S-adenosyl-L-methionine = 3-methylsulfanyl-L-aspartate(89)-[ribosomal protein uS12]-hydrogen + (sulfur carrier)-H + 5'-deoxyadenosine + L-methionine + A + S-adenosyl-L-homocysteine + 2 H(+). Catalyzes the methylthiolation of an aspartic acid residue of ribosomal protein uS12. The chain is Ribosomal protein uS12 methylthiotransferase RimO from Phocaeicola vulgatus (strain ATCC 8482 / DSM 1447 / JCM 5826 / CCUG 4940 / NBRC 14291 / NCTC 11154) (Bacteroides vulgatus).